A 77-amino-acid chain; its full sequence is Immune protein Tis1 (77 aa).

Functionally, immunity protein that plays a role in preventing early activation of toxin Tas1. This chain is Immune protein Tis1 (tis1), found in Pseudomonas aeruginosa (strain UCBPP-PA14).